The primary structure comprises 98 residues: Integration host factor subunit alpha (98 aa).

Positions F49–D70 are disordered.

Belongs to the bacterial histone-like protein family. In terms of assembly, heterodimer of an alpha and a beta chain.

Its function is as follows. This protein is one of the two subunits of integration host factor, a specific DNA-binding protein that functions in genetic recombination as well as in transcriptional and translational control. The protein is Integration host factor subunit alpha of Shewanella baltica (strain OS223).